Here is a 242-residue protein sequence, read N- to C-terminus: Cytochrome c oxidase subunit 2 (242 aa).

The Mitochondrial intermembrane segment spans residues D7 to I33. A helical membrane pass occupies residues V34–N55. Over F56–E73 the chain is Mitochondrial matrix. The helical transmembrane segment at I74 to C98 threads the bilayer. At D99 to Q242 the chain is on the mitochondrial intermembrane side. Cu cation-binding residues include H177, C212, E214, C216, H220, and M223. E214 contacts Mg(2+).

It belongs to the cytochrome c oxidase subunit 2 family. Component of the cytochrome c oxidase (complex IV, CIV), a multisubunit enzyme composed of a catalytic core of 3 subunits and several supernumerary subunits. The complex exists as a monomer or a dimer and forms supercomplexes (SCs) in the inner mitochondrial membrane with ubiquinol-cytochrome c oxidoreductase (cytochrome b-c1 complex, complex III, CIII). Requires Cu cation as cofactor. Post-translationally, the signal sequence of COX2 is processed by IMP1.

It is found in the mitochondrion inner membrane. It carries out the reaction 4 Fe(II)-[cytochrome c] + O2 + 8 H(+)(in) = 4 Fe(III)-[cytochrome c] + 2 H2O + 4 H(+)(out). Component of the cytochrome c oxidase, the last enzyme in the mitochondrial electron transport chain which drives oxidative phosphorylation. The respiratory chain contains 3 multisubunit complexes succinate dehydrogenase (complex II, CII), ubiquinol-cytochrome c oxidoreductase (cytochrome b-c1 complex, complex III, CIII) and cytochrome c oxidase (complex IV, CIV), that cooperate to transfer electrons derived from NADH and succinate to molecular oxygen, creating an electrochemical gradient over the inner membrane that drives transmembrane transport and the ATP synthase. Cytochrome c oxidase is the component of the respiratory chain that catalyzes the reduction of oxygen to water. Electrons originating from reduced cytochrome c in the intermembrane space (IMS) are transferred via the dinuclear copper A center (CU(A)) of subunit 2 and heme A of subunit 1 to the active site in subunit 1, a binuclear center (BNC) formed by heme A3 and copper B (CU(B)). The BNC reduces molecular oxygen to 2 water molecules using 4 electrons from cytochrome c in the IMS and 4 protons from the mitochondrial matrix. The protein is Cytochrome c oxidase subunit 2 (COX2) of Yarrowia lipolytica (strain CLIB 122 / E 150) (Yeast).